We begin with the raw amino-acid sequence, 379 residues long: UDP-N-acetylglucosamine--N-acetylmuramyl-(pentapeptide) pyrophosphoryl-undecaprenol N-acetylglucosamine transferase (379 aa).

UDP-N-acetyl-alpha-D-glucosamine-binding positions include 19–21 (TGG), N133, R174, S207, I261, and Q306.

The protein belongs to the glycosyltransferase 28 family. MurG subfamily.

Its subcellular location is the cell inner membrane. It carries out the reaction di-trans,octa-cis-undecaprenyl diphospho-N-acetyl-alpha-D-muramoyl-L-alanyl-D-glutamyl-meso-2,6-diaminopimeloyl-D-alanyl-D-alanine + UDP-N-acetyl-alpha-D-glucosamine = di-trans,octa-cis-undecaprenyl diphospho-[N-acetyl-alpha-D-glucosaminyl-(1-&gt;4)]-N-acetyl-alpha-D-muramoyl-L-alanyl-D-glutamyl-meso-2,6-diaminopimeloyl-D-alanyl-D-alanine + UDP + H(+). It participates in cell wall biogenesis; peptidoglycan biosynthesis. Functionally, cell wall formation. Catalyzes the transfer of a GlcNAc subunit on undecaprenyl-pyrophosphoryl-MurNAc-pentapeptide (lipid intermediate I) to form undecaprenyl-pyrophosphoryl-MurNAc-(pentapeptide)GlcNAc (lipid intermediate II). The polypeptide is UDP-N-acetylglucosamine--N-acetylmuramyl-(pentapeptide) pyrophosphoryl-undecaprenol N-acetylglucosamine transferase (Porphyromonas gingivalis (strain ATCC 33277 / DSM 20709 / CIP 103683 / JCM 12257 / NCTC 11834 / 2561)).